The sequence spans 316 residues: Transaldolase (316 aa).

The active-site Schiff-base intermediate with substrate is the Lys132.

It belongs to the transaldolase family. Type 1 subfamily. Homodimer.

It localises to the cytoplasm. It catalyses the reaction D-sedoheptulose 7-phosphate + D-glyceraldehyde 3-phosphate = D-erythrose 4-phosphate + beta-D-fructose 6-phosphate. Its pathway is carbohydrate degradation; pentose phosphate pathway; D-glyceraldehyde 3-phosphate and beta-D-fructose 6-phosphate from D-ribose 5-phosphate and D-xylulose 5-phosphate (non-oxidative stage): step 2/3. Transaldolase is important for the balance of metabolites in the pentose-phosphate pathway. The protein is Transaldolase of Marinomonas sp. (strain MWYL1).